The sequence spans 218 residues: UPF0177 protein YaiF (218 aa).

The next 5 membrane-spanning stretches (helical) occupy residues 8 to 28 (SIII…AVFL), 48 to 68 (FIIL…KCGF), 81 to 101 (ILLI…VVQF), 123 to 143 (ILSS…APIL), and 163 to 183 (FFLS…DILG).

The protein belongs to the UPF0177 family.

The protein resides in the cell membrane. The polypeptide is UPF0177 protein YaiF (yaiF) (Lactococcus lactis subsp. lactis (strain IL1403) (Streptococcus lactis)).